Consider the following 350-residue polypeptide: S-adenosylmethionine:tRNA ribosyltransferase-isomerase (350 aa).

This sequence belongs to the QueA family. Monomer.

It localises to the cytoplasm. The enzyme catalyses 7-aminomethyl-7-carbaguanosine(34) in tRNA + S-adenosyl-L-methionine = epoxyqueuosine(34) in tRNA + adenine + L-methionine + 2 H(+). The protein operates within tRNA modification; tRNA-queuosine biosynthesis. Transfers and isomerizes the ribose moiety from AdoMet to the 7-aminomethyl group of 7-deazaguanine (preQ1-tRNA) to give epoxyqueuosine (oQ-tRNA). The polypeptide is S-adenosylmethionine:tRNA ribosyltransferase-isomerase (Aliivibrio fischeri (strain MJ11) (Vibrio fischeri)).